The chain runs to 273 residues: Probable cysteine-rich repeat secretory protein 6 (273 aa).

The N-terminal stretch at 1–21 (MTRIIDVSLFCFFLFSLGAMS) is a signal peptide. Gnk2-homologous domains are found at residues 22–122 (QPSQ…DNSF) and 128–241 (DSPA…ISAL).

Belongs to the cysteine-rich repeat secretory protein family.

It localises to the secreted. This Arabidopsis thaliana (Mouse-ear cress) protein is Probable cysteine-rich repeat secretory protein 6 (CRRSP6).